Consider the following 471-residue polypeptide: ATP synthase subunit beta (471 aa).

Residue 154 to 161 (GGAGVGKT) coordinates ATP.

Belongs to the ATPase alpha/beta chains family. As to quaternary structure, F-type ATPases have 2 components, CF(1) - the catalytic core - and CF(0) - the membrane proton channel. CF(1) has five subunits: alpha(3), beta(3), gamma(1), delta(1), epsilon(1). CF(0) has three main subunits: a(1), b(2) and c(9-12). The alpha and beta chains form an alternating ring which encloses part of the gamma chain. CF(1) is attached to CF(0) by a central stalk formed by the gamma and epsilon chains, while a peripheral stalk is formed by the delta and b chains.

It localises to the cell membrane. The catalysed reaction is ATP + H2O + 4 H(+)(in) = ADP + phosphate + 5 H(+)(out). Functionally, produces ATP from ADP in the presence of a proton gradient across the membrane. The catalytic sites are hosted primarily by the beta subunits. The polypeptide is ATP synthase subunit beta (Mesomycoplasma hyopneumoniae (strain 7448) (Mycoplasma hyopneumoniae)).